The primary structure comprises 435 residues: NADH-quinone oxidoreductase subunit D (435 aa).

It belongs to the complex I 49 kDa subunit family. In terms of assembly, NDH-1 is composed of 14 different subunits. Subunits NuoB, C, D, E, F, and G constitute the peripheral sector of the complex.

It is found in the cell inner membrane. It carries out the reaction a quinone + NADH + 5 H(+)(in) = a quinol + NAD(+) + 4 H(+)(out). NDH-1 shuttles electrons from NADH, via FMN and iron-sulfur (Fe-S) centers, to quinones in the respiratory chain. The immediate electron acceptor for the enzyme in this species is believed to be ubiquinone. Couples the redox reaction to proton translocation (for every two electrons transferred, four hydrogen ions are translocated across the cytoplasmic membrane), and thus conserves the redox energy in a proton gradient. The chain is NADH-quinone oxidoreductase subunit D from Xanthomonas oryzae pv. oryzae (strain MAFF 311018).